Consider the following 255-residue polypeptide: Diphthine synthase (255 aa).

S-adenosyl-L-methionine is bound by residues Leu-9, Asp-85, Val-88, 113–114 (SI), Leu-164, Ala-207, and His-232.

Belongs to the diphthine synthase family. As to quaternary structure, homodimer.

The catalysed reaction is 2-[(3S)-amino-3-carboxypropyl]-L-histidyl-[translation elongation factor 2] + 3 S-adenosyl-L-methionine = diphthine-[translation elongation factor 2] + 3 S-adenosyl-L-homocysteine + 3 H(+). It functions in the pathway protein modification; peptidyl-diphthamide biosynthesis. Functionally, S-adenosyl-L-methionine-dependent methyltransferase that catalyzes the trimethylation of the amino group of the modified target histidine residue in translation elongation factor 2 (EF-2), to form an intermediate called diphthine. The three successive methylation reactions represent the second step of diphthamide biosynthesis. This chain is Diphthine synthase, found in Methanococcus maripaludis (strain C6 / ATCC BAA-1332).